Consider the following 10061-residue polypeptide: MATH and LRR domain-containing protein PFE0570w (10061 aa).

Disordered regions lie at residues 166-210, 244-471, and 1004-1170; these read DMDN…EKKN, NNSD…NDIN, and DDQK…DTSF. The span at 169–179 shows a compositional bias: polar residues; that stretch reads NNPNNHVSNNG. The span at 193–205 shows a compositional bias: low complexity; sequence TSNSIHKNNNTNI. Residues 270–282 show a composition bias toward basic and acidic residues; it reads KKSDNNNDKKNDD. The segment covering 285–320 has biased composition (low complexity); it reads NNNNNNNNNNNNNNNNNDNHVCTSNNQPNTINKQNN. The segment covering 328–338 has biased composition (polar residues); the sequence is DQNGRTKITPQ. Residues 338-366 are a coiled coil; that stretch reads QNVNQKEKEIKNVVKEKNNFNREEKDITN. The span at 342 to 365 shows a compositional bias: basic and acidic residues; sequence QKEKEIKNVVKEKNNFNREEKDIT. Residues 366-375 show a composition bias toward acidic residues; it reads NSDDYDENST. 2 stretches are compositionally biased toward polar residues: residues 376–389 and 421–437; these read DESCSYNPNITSSE and VPSNDNASSLNVKSAEN. The stretch at 431-469 forms a coiled coil; that stretch reads NVKSAENCNKEKKKKKKKKKKELNNDNKDNTLNNETMND. Over residues 441 to 451 the composition is skewed to basic residues; that stretch reads EKKKKKKKKKK. Positions 460–471 are enriched in low complexity; it reads NTLNNETMNDIN. Over residues 1025-1037 the composition is skewed to basic and acidic residues; that stretch reads NEEKPNVNKEGNI. The span at 1047–1057 shows a compositional bias: low complexity; the sequence is NKNKNNNNNNN. Over residues 1058–1132 the composition is skewed to basic and acidic residues; sequence DKNDKNDKND…KKKKNGKEQN (75 aa). Acidic residues predominate over residues 1133–1165; it reads EDSTESDDESSVIDDNYIDDDSCDCDSESDSID. In terms of domain architecture, MATH spans 1328-1458; that stretch reads NGKIELYIPN…SGGLLIKGKV (131 aa). The tract at residues 1651 to 1698 is disordered; that stretch reads GGNLQNEQKGDEDVKKEDVKKENVNKEEIKNGNNNNNNDENENEVDDN. Residues 1658–1680 are compositionally biased toward basic and acidic residues; the sequence is QKGDEDVKKEDVKKENVNKEEIK. A coiled-coil region spans residues 1916–1948; that stretch reads NYLSNLNKVKININDLNNNIVDVNNSIHNIEKE. The span at 1973-1995 shows a compositional bias: basic and acidic residues; that stretch reads HKETSSIQNKGKEKSNNNIKSDD. 4 disordered regions span residues 1973 to 1998, 2155 to 2245, 2427 to 2566, and 3120 to 3139; these read HKETSSIQNKGKEKSNNNIKSDDNNN, LNKS…PSYK, YSDD…NNIK, and SNETNDTNHTNRTNRTNEMK. The segment covering 2216-2228 has biased composition (acidic residues); that stretch reads NNDDKDDDDDDSY. Basic and acidic residues predominate over residues 2235-2245; it reads SDGKKNDPSYK. Residues 2475 to 2484 show a composition bias toward low complexity; that stretch reads NNNNNNNNMM. Composition is skewed to basic and acidic residues over residues 2487–2496 and 2505–2527; these read DDNKVNKNEE and QIKEGKEKKLRDFIQKEDIRNED. Composition is skewed to low complexity over residues 2552 to 2564 and 3121 to 3133; these read NNNNNNNNNNNNN and NETNDTNHTNRTN. Residues 2555 to 2580 are a coiled coil; that stretch reads NNNNNNNNNNIKRLDDSYNKLLKNKN. The helical transmembrane segment at 3398 to 3418 threads the bilayer; that stretch reads KLILKKIFMYLNIICMIIKYI. Disordered stretches follow at residues 3802–3826, 3847–3890, and 3919–3953; these read STNDEENVDRSDDSESNDDKKYSKK, LTSG…DNNN, and ESNDKSYKNQNIQSNEQSVTPNRNIEENKDHEKKS. A compositionally biased stretch (basic and acidic residues) spans 3809 to 3822; that stretch reads VDRSDDSESNDDKK. Residues 3851-3890 are compositionally biased toward low complexity; that stretch reads NSSSKNSKKNSNNESIQMDNTNNSNSNNNNKNDNNNDNNN. The segment covering 3926-3941 has biased composition (polar residues); that stretch reads KNQNIQSNEQSVTPNR. Residues 3942–3953 are compositionally biased toward basic and acidic residues; it reads NIEENKDHEKKS. Residues 3977-4001 adopt a coiled-coil conformation; sequence EHLGNATAVLNILQKKLENEELKKL. Residues 4039-4065 show a composition bias toward basic and acidic residues; sequence VSAHKEKNVKTDSSDDKKKKEDNENNN. 6 disordered regions span residues 4039–4074, 4155–4180, 4352–4414, 4919–4943, 4991–5030, and 5179–5207; these read VSAHKEKNVKTDSSDDKKKKEDNENNNKNKNNIIHN, KGNNSKDNNNNNNNNNNNNNNKNNMG, SNNN…NNNN, NKRKQQIDSSNNNNNVVVNNDDNDN, DGLNADSSNLGPYNMNNVKNKNNNNNNSNNKRKKNEKNEK, and SKIASTNGNNNNNNNNNNNNNNNNSKSNL. Residues 4157 to 4178 are compositionally biased toward low complexity; it reads NNSKDNNNNNNNNNNNNNNKNN. Residues 4399 to 4424 are a coiled coil; sequence NNNNNNNNNNNNNNNNVNKEIIKLNS. Composition is skewed to low complexity over residues 4929-4943, 5004-5019, and 5185-5202; these read NNNNNVVVNNDDNDN, NMNNVKNKNNNNNNSN, and NGNNNNNNNNNNNNNNNN. Residues 5006-5046 adopt a coiled-coil conformation; it reads NNVKNKNNNNNNSNNKRKKNEKNEKIDKIEQFLHESELEKD. Coiled-coil stretches lie at residues 5486-5563, 5728-5810, and 5900-6022; these read NNNN…NIYE, DVLK…DKEE, and MNND…INNY. Basic and acidic residues-rich tracts occupy residues 5716-5732, 5738-5811, and 5909-5953; these read KDAKKDSKKIPVDVLKD, SNKE…KEEP, and NKNK…KKDN. Disordered regions lie at residues 5716-5816, 5892-6009, 6123-6142, 6299-6338, 6722-6760, 7585-7730, and 7744-7787; these read KDAK…QINE, EIIN…KKLK, KSETEASNKNVESNDNVDGK, NDSINMPLPDSPTTTSNSNNNNNNNNSNNNNNNNNYDKGE, NMNNNNNNNNNNNNNNNNNNNNNNNNNNNNNNNNNNNNI, EDML…VEEK, and DLLS…KKSS. Low complexity predominate over residues 5954–5968; sequence NNSNNNNNNNNLSNN. Residues 5969 to 5978 are compositionally biased toward acidic residues; it reads GEEDPNDSDS. Basic and acidic residues predominate over residues 5991–6003; sequence NKNINDDSDDNNK. Residues 6129–6138 are compositionally biased toward polar residues; the sequence is SNKNVESNDN. Low complexity-rich tracts occupy residues 6314 to 6333 and 6722 to 6759; these read SNSNNNNNNNNSNNNNNNNN and NMNNNNNNNNNNNNNNNNNNNNNNNNNNNNNNNNNNNN. Residues 6719-6743 adopt a coiled-coil conformation; that stretch reads NMNNMNNNNNNNNNNNNNNNNNNNN. Over residues 7585–7599 the composition is skewed to basic and acidic residues; that stretch reads EDMLHSKKTDVIQHG. The span at 7600–7685 shows a compositional bias: acidic residues; that stretch reads DEEEDDEEDD…EHINEEEQED (86 aa). Coiled-coil stretches lie at residues 7601–7637, 7710–7813, 7934–7961, and 8217–8241; these read EEEDDEEDDEEDDEEDEEEEEEDEDEEDVEDVEDIED, NTKI…NKNE, KTDEQKIKEEIKQTQDEEDTYLDLIDNE, and NINNKEKETNKNEEQQQGEAEGKRE. Basic residues predominate over residues 7749-7765; the sequence is SKKKNHKDKRNASKNKN. Over residues 7766-7786 the composition is skewed to basic and acidic residues; it reads KNKDILKKNENNINDEKEKKS. Disordered stretches follow at residues 8189 to 8252, 8293 to 8380, and 8474 to 8497; these read ETGG…GGEE, GKVS…IIMS, and KKKNYSNNNIYNNNSSNKVSMDEE. Residues 8218-8242 are compositionally biased toward basic and acidic residues; sequence INNKEKETNKNEEQQQGEAEGKREG. Residues 8243 to 8252 are compositionally biased toward acidic residues; the sequence is EGEEGEGGEE. A compositionally biased stretch (basic and acidic residues) spans 8305–8314; it reads LLNDKEHEKD. Residues 8315-8363 are compositionally biased toward acidic residues; the sequence is NEDNDEDNDEDDDDEDDDEDDEDDDDDDDDDDDDDDDDDYDEDYDEDYD. Positions 8364 to 8374 are enriched in basic and acidic residues; sequence EKLVENKKNER. The segment covering 8478 to 8492 has biased composition (low complexity); that stretch reads YSNNNIYNNNSSNKV. Coiled coils occupy residues 8644–8697, 8882–8907, and 9219–9247; these read SETL…ELNN, QYLEKENTYNNLYKKIKDEKRIVDNY, and IDMKKKIEQEEDKKKIINNNNNNINSNNN. 3 disordered regions span residues 9759-9779, 9891-9926, and 9985-10061; these read TIPRHNTTTTNNNNNDNNNNS, SNTSGNMKNSSNIRSSSNIRSSNNIKSSSNIKSSSN, and KNNS…NNIY. Low complexity-rich tracts occupy residues 9764 to 9779, 9899 to 9926, and 9986 to 10022; these read NTTTTNNNNNDNNNNS, NSSNIRSSSNIRSSNNIKSSSNIKSSSN, and NNSITNETHNNNDNMKTNHNNNNNNNNNNNNNNNNNT. Residues 10031-10041 show a composition bias toward polar residues; it reads IFQQNQNHSDT. Residues 10042-10061 show a composition bias toward low complexity; that stretch reads NNNNNNNNKNNSNNNNNNIY.

It localises to the membrane. This chain is MATH and LRR domain-containing protein PFE0570w, found in Plasmodium falciparum (isolate 3D7).